Reading from the N-terminus, the 203-residue chain is Large ribosomal subunit protein uL22 (203 aa).

Composition is skewed to polar residues over residues 116 to 126 and 134 to 167; these read QNGGESQNQEY and VSKS…DSQL. Residues 116-203 form a disordered region; that stretch reads QNGGESQNQE…TVLAQEKEVK (88 aa). The segment covering 168–194 has biased composition (low complexity); that stretch reads SAKTNSTTTAKKTDLADNNTKNDATNT.

The protein belongs to the universal ribosomal protein uL22 family. In terms of assembly, part of the 50S ribosomal subunit.

Functionally, this protein binds specifically to 23S rRNA; its binding is stimulated by other ribosomal proteins, e.g. L4, L17, and L20. It is important during the early stages of 50S assembly. It makes multiple contacts with different domains of the 23S rRNA in the assembled 50S subunit and ribosome. Its function is as follows. The globular domain of the protein is located near the polypeptide exit tunnel on the outside of the subunit, while an extended beta-hairpin is found that lines the wall of the exit tunnel in the center of the 70S ribosome. The sequence is that of Large ribosomal subunit protein uL22 from Mesomycoplasma hyopneumoniae (strain 232) (Mycoplasma hyopneumoniae).